Consider the following 392-residue polypeptide: Iron-sulfur cluster assembly SufBD family protein ML0594 (392 aa).

It belongs to the iron-sulfur cluster assembly SufBD family.

This is Iron-sulfur cluster assembly SufBD family protein ML0594 from Mycobacterium leprae (strain TN).